The chain runs to 1486 residues: Chromosome partition protein MukB (1486 aa).

Position 34–41 (34–41 (GGNGAGKS)) interacts with ATP. Coiled coils occupy residues 326 to 418 (LEAD…QYNQ), 444 to 480 (LETF…QAYQ), and 509 to 603 (RHLA…RAPV). The tract at residues 666–783 (PGGSEDQRLN…EVPLFGRAAR (118 aa)) is flexible hinge. Coiled coils occupy residues 835–923 (EAEI…AKLE), 977–1115 (EMLS…TAKA), and 1209–1266 (VEAI…QNVS).

Belongs to the SMC family. MukB subfamily. In terms of assembly, homodimerization via its hinge domain. Binds to DNA via its C-terminal region. Interacts, and probably forms a ternary complex, with MukE and MukF via its C-terminal region. The complex formation is stimulated by calcium or magnesium. Interacts with tubulin-related protein FtsZ.

The protein resides in the cytoplasm. The protein localises to the nucleoid. Its function is as follows. Plays a central role in chromosome condensation, segregation and cell cycle progression. Functions as a homodimer, which is essential for chromosome partition. Involved in negative DNA supercoiling in vivo, and by this means organize and compact chromosomes. May achieve or facilitate chromosome segregation by condensation DNA from both sides of a centrally located replisome during cell division. This Escherichia fergusonii (strain ATCC 35469 / DSM 13698 / CCUG 18766 / IAM 14443 / JCM 21226 / LMG 7866 / NBRC 102419 / NCTC 12128 / CDC 0568-73) protein is Chromosome partition protein MukB.